The chain runs to 109 residues: Staphostatin B (109 aa).

The segment at 97-101 (IGTSR) is binds to staphopain B.

Belongs to the protease inhibitor I57 (SspC) family. In terms of assembly, forms a stable non-covalent complex with prematurely activated/folded SspB.

Its subcellular location is the cytoplasm. Functionally, specifically inhibits the cysteine protease staphopain B (SspB) by blocking the active site of the enzyme. Probably required to protect cytoplasmic proteins from being degraded by prematurely activated/folded prostaphopain B. Also involved in growth capacity, viability and bacterial morphology. This chain is Staphostatin B (sspC), found in Staphylococcus aureus (strain Mu50 / ATCC 700699).